We begin with the raw amino-acid sequence, 291 residues long: Small ribosomal subunit biogenesis GTPase RsgA 2 (291 aa).

Residues 63–221 form the CP-type G domain; sequence ENALVRPPVA…VADTPGFSSI (159 aa). GTP is bound by residues 112–115 and 164–172; these read SKMD and GQSGVGKST. Zn(2+) contacts are provided by C245, C250, H252, and C258.

The protein belongs to the TRAFAC class YlqF/YawG GTPase family. RsgA subfamily. As to quaternary structure, monomer. Associates with 30S ribosomal subunit, binds 16S rRNA. Zn(2+) is required as a cofactor.

It localises to the cytoplasm. Its function is as follows. One of several proteins that assist in the late maturation steps of the functional core of the 30S ribosomal subunit. Helps release RbfA from mature subunits. May play a role in the assembly of ribosomal proteins into the subunit. Circularly permuted GTPase that catalyzes slow GTP hydrolysis, GTPase activity is stimulated by the 30S ribosomal subunit. This is Small ribosomal subunit biogenesis GTPase RsgA 2 from Listeria innocua serovar 6a (strain ATCC BAA-680 / CLIP 11262).